The chain runs to 182 residues: uncharacterized protein (182 aa).

Disordered stretches follow at residues methionine 1–serine 49 and glutamine 126–glutamine 171. Positions glutamate 17–glycine 39 are enriched in basic and acidic residues.

This is an uncharacterized protein from Homo sapiens (Human).